Here is a 389-residue protein sequence, read N- to C-terminus: 23S rRNA (uracil(747)-C(5))-methyltransferase RlmC (389 aa).

The [4Fe-4S] cluster site is built by Cys-6, Cys-14, Cys-17, and Cys-92. Positions 217, 246, 273, and 319 each coordinate S-adenosyl-L-methionine. Cys-346 (nucleophile) is an active-site residue.

Belongs to the class I-like SAM-binding methyltransferase superfamily. RNA M5U methyltransferase family. RlmC subfamily.

It catalyses the reaction uridine(747) in 23S rRNA + S-adenosyl-L-methionine = 5-methyluridine(747) in 23S rRNA + S-adenosyl-L-homocysteine + H(+). Catalyzes the formation of 5-methyl-uridine at position 747 (m5U747) in 23S rRNA. This chain is 23S rRNA (uracil(747)-C(5))-methyltransferase RlmC, found in Glaesserella parasuis serovar 5 (strain SH0165) (Haemophilus parasuis).